The chain runs to 137 residues: Phosphoribosyl-AMP cyclohydrolase (137 aa).

D84 serves as a coordination point for Mg(2+). A Zn(2+)-binding site is contributed by C85. 2 residues coordinate Mg(2+): D86 and D88. 2 residues coordinate Zn(2+): C101 and C108.

The protein belongs to the PRA-CH family. In terms of assembly, homodimer. It depends on Mg(2+) as a cofactor. Zn(2+) serves as cofactor.

The protein resides in the cytoplasm. The enzyme catalyses 1-(5-phospho-beta-D-ribosyl)-5'-AMP + H2O = 1-(5-phospho-beta-D-ribosyl)-5-[(5-phospho-beta-D-ribosylamino)methylideneamino]imidazole-4-carboxamide. It participates in amino-acid biosynthesis; L-histidine biosynthesis; L-histidine from 5-phospho-alpha-D-ribose 1-diphosphate: step 3/9. Its function is as follows. Catalyzes the hydrolysis of the adenine ring of phosphoribosyl-AMP. In Chlorobium limicola (strain DSM 245 / NBRC 103803 / 6330), this protein is Phosphoribosyl-AMP cyclohydrolase.